The primary structure comprises 393 residues: Major outer membrane porin, serovar L1 (393 aa).

The signal sequence occupies residues 1 to 22; that stretch reads MKKLLKSVLVFAALSSASSLQA.

It belongs to the chlamydial porin (CP) (TC 1.B.2) family. In terms of assembly, part of a disulfide cross-linked outer membrane complex (COMC) composed of the major outer membrane porin (MOMP), the small cysteine-rich protein (OmcA) and the large cysteine-rich periplasmic protein (OmcB).

The protein localises to the cell outer membrane. In terms of biological role, in elementary bodies (EBs, the infectious stage, which is able to survive outside the host cell) provides the structural integrity of the outer envelope through disulfide cross-links with the small cysteine-rich protein and the large cysteine-rich periplasmic protein. It has been described in publications as the Sarkosyl-insoluble COMC (Chlamydia outer membrane complex), and serves as the functional equivalent of peptidoglycan. Functionally, permits diffusion of specific solutes through the outer membrane. The sequence is that of Major outer membrane porin, serovar L1 (ompA) from Chlamydia trachomatis.